The sequence spans 173 residues: Large ribosomal subunit protein bL9 (173 aa).

A disordered region spans residues lysine 150–valine 173.

Belongs to the bacterial ribosomal protein bL9 family.

In terms of biological role, binds to the 23S rRNA. The polypeptide is Large ribosomal subunit protein bL9 (Borreliella burgdorferi (strain ZS7) (Borrelia burgdorferi)).